Here is an 878-residue protein sequence, read N- to C-terminus: Alanine--tRNA ligase (878 aa).

Zn(2+)-binding residues include H566, H570, C668, and H672. Positions 846–866 are disordered; it reads GGGRPDMAQAGGKQPEKLEEA.

The protein belongs to the class-II aminoacyl-tRNA synthetase family. It depends on Zn(2+) as a cofactor.

It is found in the cytoplasm. The enzyme catalyses tRNA(Ala) + L-alanine + ATP = L-alanyl-tRNA(Ala) + AMP + diphosphate. In terms of biological role, catalyzes the attachment of alanine to tRNA(Ala) in a two-step reaction: alanine is first activated by ATP to form Ala-AMP and then transferred to the acceptor end of tRNA(Ala). Also edits incorrectly charged Ser-tRNA(Ala) and Gly-tRNA(Ala) via its editing domain. This chain is Alanine--tRNA ligase, found in Bacillus pumilus (strain SAFR-032).